The following is a 1002-amino-acid chain: E3 ubiquitin-protein ligase BRE1B (1002 aa).

The disordered stretch occupies residues 1 to 32; it reads MSGLSNKRAAGDGGSGPPEKKLNREEKTTTTL. The segment covering 18-28 has biased composition (basic and acidic residues); sequence PEKKLNREEKT. Lys-20 is modified (N6-acetyllysine). A Phosphoserine modification is found at Ser-42. Residues 55-91 adopt a coiled-coil conformation; the sequence is KNKKLAERLEQRQACEDELRERIEKLEKRQATDDATL. Positions 120 to 148 are disordered; it reads SSGTEVPGCQEGLTRDVIPRTDPGTSDLR. Coiled-coil stretches lie at residues 190–378 and 438–526; these read KAAV…LRSL and LQKK…ASGS. N6-acetyllysine occurs at positions 356 and 518. 2 disordered regions span residues 520–562 and 579–652; these read RAQA…PDSK and KKEE…ESEL. Residues Lys-579 and Lys-580 each participate in a glycyl lysine isopeptide (Lys-Gly) (interchain with G-Cter in SUMO2) cross-link. A phosphoserine mark is found at Ser-585 and Ser-586. 2 stretches are compositionally biased toward basic and acidic residues: residues 603-620 and 634-652; these read RGREPEARPKRELREREG and RADREKAKAEEARRKESEL. A coiled-coil region spans residues 628–947; it reads AASTLSRADR…EEIKEYKARL (320 aa). The segment at 949–988 adopts an RING-type zinc-finger fold; the sequence is CPCCNTRKKDAVLTKCFHVFCFECVRGRYEARQRKCPKCN.

This sequence belongs to the BRE1 family. Component of the RNF20/40 complex (also known as BRE1 complex) probably composed of 2 copies of RNF20/BRE1A and 2 copies of RNF40/BRE1B. Interacts with UBE2E1/UBCH6. Interacts with RB1 and WAC. May interact with STX1A. Ubiquitously expressed. Expressed in brain, testis, heart, liver and kidney. Weakly expressed in lung, spleen and skeletal muscle (at protein level).

It localises to the nucleus. It catalyses the reaction S-ubiquitinyl-[E2 ubiquitin-conjugating enzyme]-L-cysteine + [acceptor protein]-L-lysine = [E2 ubiquitin-conjugating enzyme]-L-cysteine + N(6)-ubiquitinyl-[acceptor protein]-L-lysine.. Its pathway is protein modification; protein ubiquitination. In terms of biological role, component of the RNF20/40 E3 ubiquitin-protein ligase complex that mediates monoubiquitination of 'Lys-120' of histone H2B (H2BK120ub1). H2BK120ub1 gives a specific tag for epigenetic transcriptional activation and is also prerequisite for histone H3 'Lys-4' and 'Lys-79' methylation (H3K4me and H3K79me, respectively). It thereby plays a central role in histone code and gene regulation. The RNF20/40 complex forms a H2B ubiquitin ligase complex in cooperation with the E2 enzyme UBE2A or UBE2B; reports about the cooperation with UBE2E1/UBCH are contradictory. Required for transcriptional activation of Hox genes. This chain is E3 ubiquitin-protein ligase BRE1B (Rnf40), found in Rattus norvegicus (Rat).